Here is a 335-residue protein sequence, read N- to C-terminus: MPKLDSKKEKYLKQIVENFIKTGESIGSLNLKQSYGIKKSPSYLRAIMNQLEKEGFLEKSHSSSGRIPTLQGFQYYAEFLSFDENENLANKLKDLFARRRINIENTISEAVKLISESVGTTLIATTNNENERLMSINLTQISQNEGIIVVVSSSGNVENKKITFSEQIPRQDVKIAIRLFQERLINTPLLEISSKLAILKQELEKQIKHSDELLHHFMEKIFNFQVQNKSNIYNKNSLILDKEISRAKLVDLLYIIEKKSIWEMLEDRTTKDDDTLKISIKSPEVSFISKKFEKFLPIKEISMVGAAKKINYSAARTGIKLLEDFLSNKSKIRKG.

This sequence belongs to the HrcA family.

Its function is as follows. Negative regulator of class I heat shock genes (grpE-dnaK-dnaJ and groELS operons). Prevents heat-shock induction of these operons. In Mesomycoplasma hyopneumoniae (strain 232) (Mycoplasma hyopneumoniae), this protein is Heat-inducible transcription repressor HrcA.